The chain runs to 165 residues: Small ribosomal subunit protein bS16 (165 aa).

A disordered region spans residues Leu110–Ala165. Residues Ala129–Ala144 show a composition bias toward basic and acidic residues. Positions Glu151 to Ala165 are enriched in acidic residues.

It belongs to the bacterial ribosomal protein bS16 family.

The sequence is that of Small ribosomal subunit protein bS16 from Corynebacterium glutamicum (strain R).